Here is a 382-residue protein sequence, read N- to C-terminus: Flap endonuclease 1-B (382 aa).

Residues 1 to 104 (MGIHGLAKLI…GELAKRSERR (104 aa)) form an N-domain region. D34 lines the Mg(2+) pocket. DNA is bound by residues R47 and R70. Positions 86, 158, 160, 179, and 181 each coordinate Mg(2+). The interval 122-253 (NIEKFNKRLV…KRAIDLIRQH (132 aa)) is I-domain. Residue E158 coordinates DNA. Residues G231 and D233 each coordinate DNA. Residue D233 participates in Mg(2+) binding. Residues 336–344 (TQGRLDDFF) form an interaction with PCNA region. A disordered region spans residues 352-382 (STKRKEVESKGSTKKKSKTGGTPAGKFKRGK).

Belongs to the XPG/RAD2 endonuclease family. FEN1 subfamily. In terms of assembly, interacts with PCNA. Three molecules of fen1 bind to one PCNA trimer with each molecule binding to one PCNA monomer. PCNA stimulates the nuclease activity without altering cleavage specificity. Requires Mg(2+) as cofactor. Phosphorylated. Phosphorylation upon DNA damage induces relocalization to the nuclear plasma.

The protein resides in the nucleus. It localises to the nucleolus. The protein localises to the nucleoplasm. It is found in the mitochondrion. Structure-specific nuclease with 5'-flap endonuclease and 5'-3' exonuclease activities involved in DNA replication and repair. During DNA replication, cleaves the 5'-overhanging flap structure that is generated by displacement synthesis when DNA polymerase encounters the 5'-end of a downstream Okazaki fragment. It enters the flap from the 5'-end and then tracks to cleave the flap base, leaving a nick for ligation. Also involved in the long patch base excision repair (LP-BER) pathway, by cleaving within the apurinic/apyrimidinic (AP) site-terminated flap. Acts as a genome stabilization factor that prevents flaps from equilibrating into structures that lead to duplications and deletions. Also possesses 5'-3' exonuclease activity on nicked or gapped double-stranded DNA, and exhibits RNase H activity. Also involved in replication and repair of rDNA and in repairing mitochondrial DNA. The sequence is that of Flap endonuclease 1-B (fen1-b) from Xenopus laevis (African clawed frog).